The chain runs to 158 residues: Transcriptional repressor NrdR (158 aa).

Positions 1-22 (MRCPFCGSDDTQVKDSRPAEDN) are disordered. A zinc finger lies at 3 to 34 (CPFCGSDDTQVKDSRPAEDNSAIRRRRICPDC). The segment covering 11–22 (TQVKDSRPAEDN) has biased composition (basic and acidic residues). The region spanning 49 to 139 (LTVLKKTGRK…VYRDFSHAED (91 aa)) is the ATP-cone domain.

The protein belongs to the NrdR family. The cofactor is Zn(2+).

Its function is as follows. Negatively regulates transcription of bacterial ribonucleotide reductase nrd genes and operons by binding to NrdR-boxes. The polypeptide is Transcriptional repressor NrdR (Allorhizobium ampelinum (strain ATCC BAA-846 / DSM 112012 / S4) (Agrobacterium vitis (strain S4))).